A 53-amino-acid chain; its full sequence is UPF0391 membrane protein Ent638_0536 (53 aa).

Helical transmembrane passes span 4-24 (WGII…GGLA) and 27-47 (AAWA…VSLF).

The protein belongs to the UPF0391 family.

The protein localises to the cell membrane. The polypeptide is UPF0391 membrane protein Ent638_0536 (Enterobacter sp. (strain 638)).